Here is a 222-residue protein sequence, read N- to C-terminus: MSAGDTLDKLVVFLAKRDGIDKLVKTFQYVSKLAHWAAESSSPGLAGRAKNWETSAGLSRKAFRTGRFLTGLNGLRRAPGEFGALAVLANAGEMVYFFFDHFTWLSRVGVLDAWLARRMSFISAFGESVGYVFFIAMDLIMIRRGLRQERKLLREGGKDKDKEVKKIRMDRVMRLMATAANVADLVIGIADIEPNPFCNHAVTLGISGLVSAWAGWYRNWPS.

The Cytoplasmic portion of the chain corresponds to 1–81 (MSAGDTLDKL…LNGLRRAPGE (81 aa)). A helical transmembrane segment spans residues 82 to 102 (FGALAVLANAGEMVYFFFDHF). The Lumenal segment spans residues 103 to 196 (TWLSRVGVLD…IGIADIEPNP (94 aa)). A helical membrane pass occupies residues 197 to 217 (FCNHAVTLGISGLVSAWAGWY). Over 218–222 (RNWPS) the chain is Cytoplasmic.

The protein belongs to the peroxin-11 family. In terms of tissue distribution, expressed in seedlings, shoots, leaf sheaths and flag leaf.

The protein localises to the peroxisome membrane. In terms of biological role, involved in peroxisomal proliferation. In Oryza sativa subsp. indica (Rice), this protein is Peroxisomal membrane protein 11-4 (PEX11-4).